Reading from the N-terminus, the 216-residue chain is FMN-dependent NADH:quinone oxidoreductase 2 (216 aa).

FMN contacts are provided by residues Ser9, 15–17 (SVS), 96–99 (MYNF), and 140–143 (SRGG).

This sequence belongs to the azoreductase type 1 family. Homodimer. Requires FMN as cofactor.

The catalysed reaction is 2 a quinone + NADH + H(+) = 2 a 1,4-benzosemiquinone + NAD(+). The enzyme catalyses N,N-dimethyl-1,4-phenylenediamine + anthranilate + 2 NAD(+) = 2-(4-dimethylaminophenyl)diazenylbenzoate + 2 NADH + 2 H(+). In terms of biological role, quinone reductase that provides resistance to thiol-specific stress caused by electrophilic quinones. Functionally, also exhibits azoreductase activity. Catalyzes the reductive cleavage of the azo bond in aromatic azo compounds to the corresponding amines. This is FMN-dependent NADH:quinone oxidoreductase 2 from Xanthomonas euvesicatoria pv. vesicatoria (strain 85-10) (Xanthomonas campestris pv. vesicatoria).